Reading from the N-terminus, the 155-residue chain is Transcription antitermination protein NusB (155 aa).

This sequence belongs to the NusB family.

Involved in transcription antitermination. Required for transcription of ribosomal RNA (rRNA) genes. Binds specifically to the boxA antiterminator sequence of the ribosomal RNA (rrn) operons. In Halorhodospira halophila (strain DSM 244 / SL1) (Ectothiorhodospira halophila (strain DSM 244 / SL1)), this protein is Transcription antitermination protein NusB.